The sequence spans 119 residues: Protein Wnt-4 (119 aa).

The O-palmitoleoyl serine; by PORCN moiety is linked to residue Ser1. Intrachain disulfides connect Cys69–Cys100 and Cys85–Cys95. Residue Asn86 is glycosylated (N-linked (GlcNAc...) asparagine).

It belongs to the Wnt family. Palmitoleoylation is required for efficient binding to frizzled receptors. Depalmitoleoylation leads to Wnt signaling pathway inhibition.

The protein resides in the secreted. The protein localises to the extracellular space. Its subcellular location is the extracellular matrix. Its function is as follows. Ligand for members of the frizzled family of seven transmembrane receptors. Plays an important role in embryonic development. This chain is Protein Wnt-4 (WNT-4), found in Plestiodon skiltonianus (Western skink).